The sequence spans 709 residues: MERSPFLLACILLPLVRGHSLFTCEPITVPRCMKMTYNMTFFPNLMGHYDQGIAAVEMGHFLHLANLECSPNIEMFLCQAFIPTCTEQIHVVLPCRKLCEKIVSDCKKLMDTFGIRWPEELECNRLPHCDDTVPVTSHPHTELSGPQKKSDQVPRDIGFWCPKHLRTSGDQGYRFLGIEQCAPPCPNMYFKSDELDFAKSFIGIVSIFCLCATLFTFLTFLIDVRRFRYPERPIIYYSVCYSIVSLMYFVGFLLGNSTACNKADEKLELGDTVVLGSKNKACSVVFMFLYFFTMAGTVWWVILTITWFLAAGRKWSCEAIEQKAVWFHAVAWGAPGFLTVMLLAMNKVEGDNISGVCFVGLYDLDASRYFVLLPLCLCVFVGLSLLLAGIISLNHVRQVIQHDGRNQEKLKKFMIRIGVFSGLYLVPLVTLLGCYVYELVNRITWEMTWFSDHCHQYRIPCPYQANPKARPELALFMIKYLMTLIVGISAVFWVGSKKTCTEWAGFFKRNRKRDPISESRRVLQESCEFFLKHNSKVKHKKKHGAPGPHRLKVISKSMGTSTGATTNHGTSAMAIADHDYLGQETSTEVHTSPEASVKEGRADRANTPSAKDRDCGESAGPSSKLSGNRNGRESRAGGLKERSNGSEGAPSEGRVSPKSSVPETGLIDCSTSQAASSPEPTSLKGSTSLPVHSASRARKEQGAGSHSDA.

An N-terminal signal peptide occupies residues 1 to 18; it reads MERSPFLLACILLPLVRG. The FZ domain maps to 19–132; the sequence is HSLFTCEPIT…CNRLPHCDDT (114 aa). Residues 19–201 are Extracellular-facing; that stretch reads HSLFTCEPIT…SDELDFAKSF (183 aa). Intrachain disulfides connect Cys24/Cys85, Cys32/Cys78, Cys69/Cys106, Cys95/Cys129, and Cys99/Cys123. A glycan (N-linked (GlcNAc...) asparagine) is linked at Asn38. Residues 202-222 traverse the membrane as a helical segment; that stretch reads IGIVSIFCLCATLFTFLTFLI. Residues 223-233 are Cytoplasmic-facing; sequence DVRRFRYPERP. A helical membrane pass occupies residues 234–254; it reads IIYYSVCYSIVSLMYFVGFLL. The Extracellular segment spans residues 255–284; sequence GNSTACNKADEKLELGDTVVLGSKNKACSV. A glycan (N-linked (GlcNAc...) asparagine) is linked at Asn256. A helical membrane pass occupies residues 285–305; sequence VFMFLYFFTMAGTVWWVILTI. The Cytoplasmic portion of the chain corresponds to 306 to 324; sequence TWFLAAGRKWSCEAIEQKA. The chain crosses the membrane as a helical span at residues 325–345; sequence VWFHAVAWGAPGFLTVMLLAM. The Extracellular segment spans residues 346–370; the sequence is NKVEGDNISGVCFVGLYDLDASRYF. N-linked (GlcNAc...) asparagine glycosylation occurs at Asn352. Residues 371–391 traverse the membrane as a helical segment; that stretch reads VLLPLCLCVFVGLSLLLAGII. The Cytoplasmic segment spans residues 392 to 416; that stretch reads SLNHVRQVIQHDGRNQEKLKKFMIR. The chain crosses the membrane as a helical span at residues 417 to 437; the sequence is IGVFSGLYLVPLVTLLGCYVY. Over 438 to 473 the chain is Extracellular; that stretch reads ELVNRITWEMTWFSDHCHQYRIPCPYQANPKARPEL. Residues 474–494 traverse the membrane as a helical segment; that stretch reads ALFMIKYLMTLIVGISAVFWV. Topologically, residues 495-709 are cytoplasmic; sequence GSKKTCTEWA…EQGAGSHSDA (215 aa). The short motif at 498–503 is the Lys-Thr-X-X-X-Trp motif, mediates interaction with the PDZ domain of Dvl family members element; sequence KTCTEW. Residues 583 to 594 show a composition bias toward polar residues; it reads QETSTEVHTSPE. The tract at residues 583-709 is disordered; that stretch reads QETSTEVHTS…EQGAGSHSDA (127 aa). The segment covering 596-616 has biased composition (basic and acidic residues); it reads SVKEGRADRANTPSAKDRDCG. The segment covering 620 to 629 has biased composition (polar residues); that stretch reads GPSSKLSGNR. The segment covering 630–644 has biased composition (basic and acidic residues); the sequence is NGRESRAGGLKERSN. The residue at position 656 (Ser656) is a Phosphoserine. Residues 669 to 690 show a composition bias toward polar residues; sequence CSTSQAASSPEPTSLKGSTSLP. The segment covering 697-709 has biased composition (basic and acidic residues); sequence ARKEQGAGSHSDA.

This sequence belongs to the G-protein coupled receptor Fz/Smo family. As to quaternary structure, interacts with LMBR1L. In terms of processing, ubiquitinated by ZNRF3, leading to its degradation by the proteasome. Expressed in both hair cells and supporting cells in the utricle, saccule, cristae and the organ of Corti in the inner ear (at protein level).

It is found in the membrane. Its subcellular location is the cell membrane. The protein resides in the cell surface. It localises to the apical cell membrane. The protein localises to the cytoplasmic vesicle membrane. It is found in the endoplasmic reticulum membrane. Its function is as follows. Receptor for Wnt proteins. Most of frizzled receptors are coupled to the beta-catenin canonical signaling pathway, which leads to the activation of disheveled proteins, inhibition of GSK-3 kinase, nuclear accumulation of beta-catenin and activation of Wnt target genes. A second signaling pathway involving PKC and calcium fluxes has been seen for some family members, but it is not yet clear if it represents a distinct pathway or if it can be integrated in the canonical pathway, as PKC seems to be required for Wnt-mediated inactivation of GSK-3 kinase. Both pathways seem to involve interactions with G-proteins. Activation by Wnt5A stimulates PKC activity via a G-protein-dependent mechanism. Involved in transduction and intercellular transmission of polarity information during tissue morphogenesis and/or in differentiated tissues. Together with FZD3, is involved in the neural tube closure and plays a role in the regulation of the establishment of planar cell polarity (PCP), particularly in the orientation of asymmetric bundles of stereocilia on the apical faces of a subset of auditory and vestibular sensory cells located in the inner ear. The polypeptide is Frizzled-6 (Fzd6) (Mus musculus (Mouse)).